A 239-amino-acid polypeptide reads, in one-letter code: Succinate dehydrogenase [ubiquinone] iron-sulfur subunit (239 aa).

In terms of domain architecture, 2Fe-2S ferredoxin-type spans 24–99 (AEAKFSVHPI…NANIITIYPL (76 aa)). [2Fe-2S] cluster contacts are provided by Cys-63, Cys-68, Cys-71, and Cys-83. One can recognise a 4Fe-4S ferredoxin-type domain in the interval 142-172 (DRSELNGIYECILCACCSASCPSYWWNHDKY). 3 residues coordinate [4Fe-4S] cluster: Cys-152, Cys-155, and Cys-158. Cys-162 serves as a coordination point for [3Fe-4S] cluster. Trp-167 contributes to the a ubiquinone binding site. 2 residues coordinate [3Fe-4S] cluster: Cys-209 and Cys-215. A [4Fe-4S] cluster-binding site is contributed by Cys-219.

It belongs to the succinate dehydrogenase/fumarate reductase iron-sulfur protein family. In terms of assembly, component of complex II composed of four subunits: a flavoprotein (FP), an iron-sulfur protein (IP), and a cytochrome b composed of a large and a small subunit. Requires [2Fe-2S] cluster as cofactor. The cofactor is [3Fe-4S] cluster. It depends on [4Fe-4S] cluster as a cofactor.

It localises to the mitochondrion inner membrane. The enzyme catalyses a quinone + succinate = fumarate + a quinol. Its pathway is carbohydrate metabolism; tricarboxylic acid cycle; fumarate from succinate (eukaryal route): step 1/1. In terms of biological role, iron-sulfur protein (IP) subunit of succinate dehydrogenase (SDH) that is involved in complex II of the mitochondrial electron transport chain and is responsible for transferring electrons from succinate to ubiquinone (coenzyme Q). This Porphyra purpurea (Red seaweed) protein is Succinate dehydrogenase [ubiquinone] iron-sulfur subunit (SDH2).